The sequence spans 122 residues: MSITNEQILDAVAEMSVMQVVELIEAMEEKFGVTAAAAVVAGGAAGGDAAEEQSEFDVILTSAGANKVAVIKAVRGATGLGLKEAKGLVDSAPAPLKEGVDKAEAEALKAQLEEAGASVEVK.

Belongs to the bacterial ribosomal protein bL12 family. As to quaternary structure, homodimer. Part of the ribosomal stalk of the 50S ribosomal subunit. Forms a multimeric L10(L12)X complex, where L10 forms an elongated spine to which 2 to 4 L12 dimers bind in a sequential fashion. Binds GTP-bound translation factors.

Forms part of the ribosomal stalk which helps the ribosome interact with GTP-bound translation factors. Is thus essential for accurate translation. The chain is Large ribosomal subunit protein bL12 from Aliivibrio fischeri (strain ATCC 700601 / ES114) (Vibrio fischeri).